Here is a 467-residue protein sequence, read N- to C-terminus: UDP-N-acetylmuramate--L-alanine ligase (467 aa).

114 to 120 (GTHGKTT) contacts ATP.

The protein belongs to the MurCDEF family.

Its subcellular location is the cytoplasm. It catalyses the reaction UDP-N-acetyl-alpha-D-muramate + L-alanine + ATP = UDP-N-acetyl-alpha-D-muramoyl-L-alanine + ADP + phosphate + H(+). It functions in the pathway cell wall biogenesis; peptidoglycan biosynthesis. Functionally, cell wall formation. The sequence is that of UDP-N-acetylmuramate--L-alanine ligase from Rhodopseudomonas palustris (strain BisB18).